A 64-amino-acid chain; its full sequence is MPKMKSKKSLAKRVIAKKNGTLKRGKAYRSHRATGKTTKQKRHLEKATIVHVTDMKRIKGLLQK.

The disordered stretch occupies residues 1-43; sequence MPKMKSKKSLAKRVIAKKNGTLKRGKAYRSHRATGKTTKQKRH.

This sequence belongs to the bacterial ribosomal protein bL35 family.

This is Large ribosomal subunit protein bL35 from Mesoplasma florum (strain ATCC 33453 / NBRC 100688 / NCTC 11704 / L1) (Acholeplasma florum).